A 238-amino-acid polypeptide reads, in one-letter code: 2-C-methyl-D-erythritol 4-phosphate cytidylyltransferase (238 aa).

This sequence belongs to the IspD/TarI cytidylyltransferase family. IspD subfamily.

The catalysed reaction is 2-C-methyl-D-erythritol 4-phosphate + CTP + H(+) = 4-CDP-2-C-methyl-D-erythritol + diphosphate. It participates in isoprenoid biosynthesis; isopentenyl diphosphate biosynthesis via DXP pathway; isopentenyl diphosphate from 1-deoxy-D-xylulose 5-phosphate: step 2/6. Functionally, catalyzes the formation of 4-diphosphocytidyl-2-C-methyl-D-erythritol from CTP and 2-C-methyl-D-erythritol 4-phosphate (MEP). This is 2-C-methyl-D-erythritol 4-phosphate cytidylyltransferase from Acinetobacter baumannii (strain AYE).